The sequence spans 295 residues: sn-glycerol-3-phosphate transport system permease protein UgpA (295 aa).

Residues 1–11 are Cytoplasmic-facing; sequence MSSSRPVFRSR. A helical transmembrane segment spans residues 12 to 32; sequence WLPYLLVAPQLIITVIFFIWP. Residues 33–80 lie on the Periplasmic side of the membrane; that stretch reads AGEALWYSLQSVDPFGFSSRFVGLDNFVALFHDSYYIDSFWTTIKFST. Residues 76-284 form the ABC transmembrane type-1 domain; sequence IKFSTFVTVS…FLVIVLTVMQ (209 aa). The chain crosses the membrane as a helical span at residues 81–101; it reads FVTVSGLLVSLFFAALVEYIV. The Cytoplasmic segment spans residues 102–109; that stretch reads RGSRFYQT. A helical membrane pass occupies residues 110-130; that stretch reads LMLLPYAVAPAVAAVLWIFLF. The Periplasmic portion of the chain corresponds to 131–156; that stretch reads NPGRGLITHFLAEFGYDWNHAQNSGQ. The helical transmembrane segment at 157–177 threads the bilayer; sequence AMFLVVFASVWKQISYNFLFF. The Cytoplasmic segment spans residues 178–207; that stretch reads YAALQSIPRSLIEAAAIDGAGPIRRFFKIA. A helical transmembrane segment spans residues 208–228; it reads LPLIAPVSFFLLVVNLVYAFF. Topologically, residues 229-262 are periplasmic; sequence DTFPVIDAATSGGPVQATTTLIYKIYREGFTGLD. The helical transmembrane segment at 263–283 threads the bilayer; the sequence is LASSAAQSVVLMFLVIVLTVM. At 284–295 the chain is on the cytoplasmic side; it reads QFRYVESKVRYQ.

The protein belongs to the binding-protein-dependent transport system permease family. UgpAE subfamily. The complex is composed of two ATP-binding proteins (UgpC), two transmembrane proteins (UgpA and UgpE) and a solute-binding protein (UgpB).

The protein localises to the cell inner membrane. Its function is as follows. Part of the ABC transporter complex UgpBAEC involved in sn-glycerol-3-phosphate (G3P) import. Probably responsible for the translocation of the substrate across the membrane. This Escherichia coli O157:H7 protein is sn-glycerol-3-phosphate transport system permease protein UgpA (ugpA).